The chain runs to 25 residues: Mu-conotoxin CnIIIB (25 aa).

Residue glutamine 1 is modified to Pyrrolidone carboxylic acid; partial. 3 disulfide bridges follow: cysteine 3–cysteine 15, cysteine 4–cysteine 21, and cysteine 10–cysteine 22.

It belongs to the conotoxin M superfamily. As to expression, expressed by the venom duct.

It is found in the secreted. In terms of biological role, mu-conotoxins block voltage-gated sodium channels (Nav). This synthetic toxin blocks slightly but irreversibly tetrodotoxin-resistant VGSCs. This is Mu-conotoxin CnIIIB from Conus consors (Singed cone).